Here is a 256-residue protein sequence, read N- to C-terminus: UPF0246 protein Bpet1601 (256 aa).

The protein belongs to the UPF0246 family.

The sequence is that of UPF0246 protein Bpet1601 from Bordetella petrii (strain ATCC BAA-461 / DSM 12804 / CCUG 43448).